Here is a 353-residue protein sequence, read N- to C-terminus: MTIALGKFTEDEKDLFDIMDDWLRRDRFVFVGWSGLLLFPCAYFALGGWFTGTTFVTSWYTHGLASSYLEGCNFLTAAVSTPANSLAHSLLLLWGPEAQGDFTRWCQLGGLWTFVALHGAFGLIGFMLRQFELARSVQLRPYNAIAFSGPIAVFVSVFLIYPLGQSGWFFAPSFGVAAIFRFILFFQGFHNWTLNPFHMMGVAGVLGAALLCAIHGATVENLYFEDGDGANTFRAFNPTQAEETYSMVTANRFWSQIFGVAFSNKRWLHFFMLFVPVTGLWMSALGVVGLALNLRAYDFVSQEIRAAEDPEFETFYTKNILLNEGIRAWMAAQDQPHENLIFPEEVLPRGNAL.

Threonine 2 is modified (N-acetylthreonine). The residue at position 2 (threonine 2) is a Phosphothreonine. The helical transmembrane segment at 41-61 threads the bilayer; that stretch reads CAYFALGGWFTGTTFVTSWYT. Position 118 (histidine 118) interacts with chlorophyll a. A helical membrane pass occupies residues 125–141; it reads GFMLRQFELARSVQLRP. Positions 130 and 143 each coordinate pheophytin a. Residues 153-166 traverse the membrane as a helical segment; sequence VFVSVFLIYPLGQS. Histidine 198 is a chlorophyll a binding site. The helical transmembrane segment at 208–228 threads the bilayer; that stretch reads AALLCAIHGATVENLYFEDGD. 2 residues coordinate a plastoquinone: histidine 215 and phenylalanine 262. Position 215 (histidine 215) interacts with Fe cation. Histidine 269 contacts Fe cation. A helical transmembrane segment spans residues 279–295; that stretch reads GLWMSALGVVGLALNLR.

This sequence belongs to the reaction center PufL/M/PsbA/D family. As to quaternary structure, PSII is composed of 1 copy each of membrane proteins PsbA, PsbB, PsbC, PsbD, PsbE, PsbF, PsbH, PsbI, PsbJ, PsbK, PsbL, PsbM, PsbT, PsbX, PsbY, PsbZ, Psb30/Ycf12, at least 3 peripheral proteins of the oxygen-evolving complex and a large number of cofactors. It forms dimeric complexes. It depends on The D1/D2 heterodimer binds P680, chlorophylls that are the primary electron donor of PSII, and subsequent electron acceptors. It shares a non-heme iron and each subunit binds pheophytin, quinone, additional chlorophylls, carotenoids and lipids. There is also a Cl(-1) ion associated with D1 and D2, which is required for oxygen evolution. The PSII complex binds additional chlorophylls, carotenoids and specific lipids. as a cofactor.

The protein localises to the plastid. It is found in the chloroplast thylakoid membrane. The enzyme catalyses 2 a plastoquinone + 4 hnu + 2 H2O = 2 a plastoquinol + O2. Photosystem II (PSII) is a light-driven water:plastoquinone oxidoreductase that uses light energy to abstract electrons from H(2)O, generating O(2) and a proton gradient subsequently used for ATP formation. It consists of a core antenna complex that captures photons, and an electron transfer chain that converts photonic excitation into a charge separation. The D1/D2 (PsbA/PsbD) reaction center heterodimer binds P680, the primary electron donor of PSII as well as several subsequent electron acceptors. D2 is needed for assembly of a stable PSII complex. The chain is Photosystem II D2 protein from Panax ginseng (Korean ginseng).